The chain runs to 110 residues: Cysteine-rich and transmembrane domain-containing protein 1 (110 aa).

The segment covering 1–18 has biased composition (pro residues); it reads MNYENPPPYASPPAPYPP. The segment at 1–45 is disordered; the sequence is MNYENPPPYASPPAPYPPYGQQQPSYPVPNQYPGNPPGPVGYQPA. The span at 19–29 shows a compositional bias: low complexity; sequence YGQQQPSYPVP. The helical transmembrane segment at 87–104 threads the bilayer; the sequence is SGESACLTACWTALCCCC.

It belongs to the CYSTM1 family.

It localises to the membrane. In Xenopus tropicalis (Western clawed frog), this protein is Cysteine-rich and transmembrane domain-containing protein 1 (cystm1).